A 104-amino-acid chain; its full sequence is Flagellar hook-basal body complex protein FliE (104 aa).

This sequence belongs to the FliE family.

The protein localises to the bacterial flagellum basal body. The sequence is that of Flagellar hook-basal body complex protein FliE from Edwardsiella ictaluri (strain 93-146).